Reading from the N-terminus, the 215-residue chain is Thymidylate kinase (215 aa).

Residue 7 to 14 (GLDGSGKT) coordinates ATP.

It belongs to the thymidylate kinase family.

The catalysed reaction is dTMP + ATP = dTDP + ADP. Functionally, phosphorylation of dTMP to form dTDP in both de novo and salvage pathways of dTTP synthesis. The sequence is that of Thymidylate kinase from Mycoplasmopsis agalactiae (strain NCTC 10123 / CIP 59.7 / PG2) (Mycoplasma agalactiae).